An 852-amino-acid chain; its full sequence is Zinc finger and SCAN domain-containing protein 29 (852 aa).

Residues 18-100 (RQRFRRFHYQ…TLVEDLEREP (83 aa)) enclose the SCAN box domain. 3 disordered regions span residues 96 to 182 (LERE…PKSG), 347 to 400 (ASHS…SAAP), and 502 to 557 (PNDG…RAPV). A Glycyl lysine isopeptide (Lys-Gly) (interchain with G-Cter in SUMO2) cross-link involves residue Lys112. Ser153 is subject to Phosphoserine. Lys180 participates in a covalent cross-link: Glycyl lysine isopeptide (Lys-Gly) (interchain with G-Cter in SUMO2). Positions 508 to 517 (ETASCPVQGT) are enriched in polar residues. A compositionally biased stretch (acidic residues) spans 528–545 (EADEATEEDSDDDEEDTE). Phosphoserine is present on Ser561. Residue Lys576 forms a Glycyl lysine isopeptide (Lys-Gly) (interchain with G-Cter in SUMO2) linkage. Residues 603–625 (QGKGNESDCRSGRQWAKTSGEKR) form a disordered region. Residue Lys652 forms a Glycyl lysine isopeptide (Lys-Gly) (interchain with G-Cter in SUMO2) linkage. 6 consecutive C2H2-type zinc fingers follow at residues 678-700 (YKCADCGKSFSRSARLIRHRRIH), 706-728 (YKCLDCGKSFRDSSNFITHRRIH), 734-756 (YQCGECGKCFNQSSSLIIHQRTH), 762-784 (YQCEECGKSFNNSSHFSAHRRIH), 790-812 (HVCPDCGKSFSKSSDLRAHHRTH), and 818-840 (YGCHDCGKCFSKSSALNKHGEIH).

Belongs to the krueppel C2H2-type zinc-finger protein family.

The protein localises to the nucleus. Its function is as follows. May be involved in transcriptional regulation. The polypeptide is Zinc finger and SCAN domain-containing protein 29 (ZSCAN29) (Homo sapiens (Human)).